Reading from the N-terminus, the 712-residue chain is Polyribonucleotide nucleotidyltransferase (712 aa).

Asp-484 and Asp-490 together coordinate Mg(2+). The region spanning 550–609 is the KH domain; the sequence is PKYKTMDVNPEKIRVLIGPGGKNIKAIIEETGSDVEIQDSGVVNIFAPDTPTLDKTIKLI. In terms of domain architecture, S1 motif spans 619 to 686; it reads GEVYDGIVKD…KGGKYSLSRK (68 aa).

Belongs to the polyribonucleotide nucleotidyltransferase family. Mg(2+) is required as a cofactor.

Its subcellular location is the cytoplasm. The catalysed reaction is RNA(n+1) + phosphate = RNA(n) + a ribonucleoside 5'-diphosphate. In terms of biological role, involved in mRNA degradation. Catalyzes the phosphorolysis of single-stranded polyribonucleotides processively in the 3'- to 5'-direction. This Brachyspira hyodysenteriae (strain ATCC 49526 / WA1) protein is Polyribonucleotide nucleotidyltransferase.